The chain runs to 444 residues: Phosphoribosylamine--glycine ligase (444 aa).

The region spanning 109-324 (RNLFKKYNIK…FLEVCEAIVN (216 aa)) is the ATP-grasp domain. 140 to 202 (LTEKGIKAVV…EEKLEGVEFT (63 aa)) contributes to the ATP binding site. Mg(2+) contacts are provided by Q282, E294, and N296. 3 residues coordinate Mn(2+): Q282, E294, and N296.

The protein belongs to the GARS family. Requires Mg(2+) as cofactor. The cofactor is Mn(2+).

It carries out the reaction 5-phospho-beta-D-ribosylamine + glycine + ATP = N(1)-(5-phospho-beta-D-ribosyl)glycinamide + ADP + phosphate + H(+). It participates in purine metabolism; IMP biosynthesis via de novo pathway; N(1)-(5-phospho-D-ribosyl)glycinamide from 5-phospho-alpha-D-ribose 1-diphosphate: step 2/2. This is Phosphoribosylamine--glycine ligase from Methanocaldococcus jannaschii (strain ATCC 43067 / DSM 2661 / JAL-1 / JCM 10045 / NBRC 100440) (Methanococcus jannaschii).